A 180-amino-acid chain; its full sequence is Large ribosomal subunit protein uL5 (180 aa).

Belongs to the universal ribosomal protein uL5 family. As to quaternary structure, part of the 50S ribosomal subunit; part of the 5S rRNA/L5/L18/L25 subcomplex. Contacts the 5S rRNA and the P site tRNA. Forms a bridge to the 30S subunit in the 70S ribosome.

This is one of the proteins that bind and probably mediate the attachment of the 5S RNA into the large ribosomal subunit, where it forms part of the central protuberance. In the 70S ribosome it contacts protein S13 of the 30S subunit (bridge B1b), connecting the 2 subunits; this bridge is implicated in subunit movement. Contacts the P site tRNA; the 5S rRNA and some of its associated proteins might help stabilize positioning of ribosome-bound tRNAs. The protein is Large ribosomal subunit protein uL5 of Ligilactobacillus salivarius (strain UCC118) (Lactobacillus salivarius).